A 348-amino-acid chain; its full sequence is Dihydroorotase (348 aa).

His14 and His16 together coordinate Zn(2+). Substrate-binding positions include 16–18 (HLR) and Asn42. Zn(2+) is bound by residues Lys100, His137, and His175. The residue at position 100 (Lys100) is an N6-carboxylysine. A substrate-binding site is contributed by His137. Leu220 is a substrate binding site. Asp248 lines the Zn(2+) pocket. Residue Asp248 is part of the active site. Residues His252 and Ala264 each coordinate substrate.

This sequence belongs to the metallo-dependent hydrolases superfamily. DHOase family. Class II DHOase subfamily. In terms of assembly, homodimer. Zn(2+) is required as a cofactor.

The enzyme catalyses (S)-dihydroorotate + H2O = N-carbamoyl-L-aspartate + H(+). It functions in the pathway pyrimidine metabolism; UMP biosynthesis via de novo pathway; (S)-dihydroorotate from bicarbonate: step 3/3. Catalyzes the reversible cyclization of carbamoyl aspartate to dihydroorotate. The protein is Dihydroorotase of Pseudomonas fluorescens (strain Pf0-1).